The primary structure comprises 406 residues: MIVLVVNSGSSSIKYQLLDMDNEKVLCKGLAERIGIPGSRIVHKKDGEKFVIEHPMANHDEALQLVLQTLKDEKMGAIKDFKEIDAVGHRVVHGGEKFSGSVLIDDEVINAIEEFSYLAPLHNPPNLMGIKAIMKLLPGVPNVAVFDTAFHAKMPKKAYLYAIPYEYYEKYKIRRYGFHGTSHRYVSRRTAEILGLDYNKSKIITVHLGNGASIAAVMNGKSVDTSMGFTPLEGLVMGTRSGDLDPSIVTFLIEKEGLSPEEVYTILNKKSGVLGLTSNFSSDMRDIEDKALENDPLCRLVLDIYEYRIAKYIGAYVAAMNGVDAISFTAGVGENSPITREEICENYLSYLGIKIDKEKNNVKGEERIISTPDSKVKVLIVPTNEELMIARDTKEIIEKGIKKLEY.

Asn7 lines the Mg(2+) pocket. Lys14 is a binding site for ATP. Arg90 is a substrate binding site. Asp147 functions as the Proton donor/acceptor in the catalytic mechanism. ATP-binding positions include 207–211 (HLGNG), 283–285 (DMR), and 331–335 (GVGEN). Glu385 provides a ligand contact to Mg(2+).

It belongs to the acetokinase family. In terms of assembly, homodimer. The cofactor is Mg(2+). Requires Mn(2+) as cofactor.

Its subcellular location is the cytoplasm. The catalysed reaction is acetate + ATP = acetyl phosphate + ADP. The protein operates within metabolic intermediate biosynthesis; acetyl-CoA biosynthesis; acetyl-CoA from acetate: step 1/2. Its function is as follows. Catalyzes the formation of acetyl phosphate from acetate and ATP. Can also catalyze the reverse reaction. The chain is Acetate kinase from Thermosipho africanus (strain TCF52B).